We begin with the raw amino-acid sequence, 443 residues long: Phenylalanine--tRNA ligase alpha subunit (443 aa).

L-phenylalanine is bound by residues threonine 332, 375–377 (QVE), and tyrosine 415. Glutamate 417 contacts Mg(2+). Phenylalanine 441 is a binding site for L-phenylalanine.

Belongs to the class-II aminoacyl-tRNA synthetase family. Phe-tRNA synthetase alpha subunit type 2 subfamily. Heterotetramer; dimer of two heterodimers formed by FARSA and FARSB. It depends on Mg(2+) as a cofactor.

The protein localises to the cytoplasm. It carries out the reaction tRNA(Phe) + L-phenylalanine + ATP = L-phenylalanyl-tRNA(Phe) + AMP + diphosphate + H(+). The polypeptide is Phenylalanine--tRNA ligase alpha subunit (FARSA) (Gallus gallus (Chicken)).